The following is a 644-amino-acid chain: Probable potassium transport system protein Kup 2 (644 aa).

Residues 1–21 (MSSDAAAVADRDGSSPGHGGH) are disordered. A run of 12 helical transmembrane segments spans residues 26 to 46 (LGAMVVGAVGVVFGDIGTSPL), 69 to 89 (VLSLIFWSMMLVVTFKYVAII), 120 to 140 (IILLGVFATALFYGDSMITPA), 155 to 175 (AGFAPMVLPIAVGILIALFMI), 183 to 203 (VGMLFGPIMMIYFTTLGVLGT), 231 to 251 (LAFLAMGSVVLAVTGAEALYA), 265 to 285 (WLVFVLPALMLNYLGQGAMIL), 312 to 332 (LVILATMATVIASQAVITGAF), 360 to 380 (IYIPAINWGLMVMVILLVMSF), 390 to 410 (YGIAVTGAMAIDTCLIAVVLI), 419 to 439 (LAAPLIAVFAAVDIAYFGANL), and 444 to 464 (DGGWFPLLIGFIAFTLLTTWG).

The protein belongs to the HAK/KUP transporter (TC 2.A.72) family.

The protein localises to the cell inner membrane. The catalysed reaction is K(+)(in) + H(+)(in) = K(+)(out) + H(+)(out). In terms of biological role, transport of potassium into the cell. Likely operates as a K(+):H(+) symporter. In Rhizorhabdus wittichii (strain DSM 6014 / CCUG 31198 / JCM 15750 / NBRC 105917 / EY 4224 / RW1) (Sphingomonas wittichii), this protein is Probable potassium transport system protein Kup 2.